Consider the following 57-residue polypeptide: uncharacterized protein (57 aa).

Residues 34–54 form a helical membrane-spanning segment; it reads AALLDAAALVVIPGLLTAAAV.

It is found in the membrane. This is an uncharacterized protein from Dictyostelium discoideum (Social amoeba).